The sequence spans 358 residues: 3-isopropylmalate dehydrogenase (358 aa).

Residue 75 to 88 coordinates NAD(+); sequence GPKWETLPPEKQPE. R96, R106, R135, and D225 together coordinate substrate. Mg(2+) is bound by residues D225, D249, and D253. Residue 283–295 coordinates NAD(+); sequence GSAPDIAGKGVAN.

This sequence belongs to the isocitrate and isopropylmalate dehydrogenases family. LeuB type 1 subfamily. In terms of assembly, homodimer. Requires Mg(2+) as cofactor. Mn(2+) serves as cofactor.

The protein localises to the cytoplasm. It catalyses the reaction (2R,3S)-3-isopropylmalate + NAD(+) = 4-methyl-2-oxopentanoate + CO2 + NADH. Its pathway is amino-acid biosynthesis; L-leucine biosynthesis; L-leucine from 3-methyl-2-oxobutanoate: step 3/4. Its function is as follows. Catalyzes the oxidation of 3-carboxy-2-hydroxy-4-methylpentanoate (3-isopropylmalate) to 3-carboxy-4-methyl-2-oxopentanoate. The product decarboxylates to 4-methyl-2 oxopentanoate. This is 3-isopropylmalate dehydrogenase from Leptospira interrogans serogroup Icterohaemorrhagiae serovar copenhageni (strain Fiocruz L1-130).